Reading from the N-terminus, the 345-residue chain is DNA primase small subunit PriS (345 aa).

Active-site residues include D95 and D97. Positions 106, 108, 114, and 117 each coordinate Zn(2+). A Zinc knuckle motif motif is present at residues 106 to 117; it reads CNHEPGKVCPIC. D280 is a catalytic residue.

Belongs to the eukaryotic-type primase small subunit family. As to quaternary structure, heterodimer of a small subunit (PriS) and a large subunit (PriL). Mg(2+) is required as a cofactor. Mn(2+) serves as cofactor.

Functionally, catalytic subunit of DNA primase, an RNA polymerase that catalyzes the synthesis of short RNA molecules used as primers for DNA polymerase during DNA replication. The small subunit contains the primase catalytic core and has DNA synthesis activity on its own, synthesizing DNA strands up to 3 kB. Binding to the large subunit stabilizes and modulates the activity, increasing the rate of DNA synthesis while decreasing the length of the DNA fragments, and conferring RNA synthesis capability for RNA fragments up to 150 bases. The DNA polymerase activity may enable DNA primase to also catalyze primer extension after primer synthesis. May also play a role in DNA repair. Displays gap-filling and strand-displacement activities. This chain is DNA primase small subunit PriS, found in Pyrococcus abyssi (strain GE5 / Orsay).